A 354-amino-acid chain; its full sequence is Trans-L-3-hydroxyproline dehydratase (354 aa).

Residue Cys-104 is the Proton acceptor of the active site. Residues 105 to 106 (GH), Asp-269, and 274 to 275 (GS) contribute to the substrate site.

It belongs to the proline racemase family. As to quaternary structure, homodimer.

The enzyme catalyses trans-3-hydroxy-L-proline = 1-pyrroline-2-carboxylate + H2O. In terms of biological role, catalyzes the dehydration of trans-3-hydroxy-L-proline to delta-1-pyrroline-2-carboxylate (Pyr2C). In Pongo abelii (Sumatran orangutan), this protein is Trans-L-3-hydroxyproline dehydratase (L3HYPDH).